The primary structure comprises 563 residues: MPLPWISLIWFAYLIVITVLIVVASVFIHVYQTPRDRSSFVTFMCVFSIAALLATVMLLPVDVALVSSTTSSALGQRKEWATQEEVDKITYSLTVIYYSLYFLDALLCLVGIPFAYFWHEEYDEVAFEAGDQTPCKRFWAATKYTLAFIAVVIALVLVGFFAPMSESQPGHDLGYWRGFLIENRGEHAFTFLLGFVTTIGSCLYVFYTPSGLALLPALFLRRSYSFANQTLVGSTAMQLDFNRERQRQLEGRCGGNSALLSPKDRRELDTLVREERTLIRRQRLIEGRQEEDQSWPVTVYSKLKTILRPFRLLGGFSLFLVGLSTWISLLMTVIDKLINSPCKHHCGYVLSRTNFNPISWLLIQSSRAFPTDYIIFALIVFLFFWGSVVGVVAVGIRFLWIRIFQIRKGHTSPQAMLLATAMLTLITLGLNYSVVMMLAPRYATFGPQTFCDLAPTSSEEQPDCSNHWHLVKPCSEKADSTAADNTCTPSVASTILNRVALNFPLFGALLLWAHFLFLGIYLVILVASLVRSPRLDERQLDEDAEEAEEESLLASTGRSGNPT.

5 helical membrane passes run 8-28 (LIWF…SVFI), 40-60 (FVTF…MLLP), 95-115 (VIYY…IPFA), 144-164 (YTLA…FAPM), and 188-208 (AFTF…VFYT). A glycan (N-linked (GlcNAc...) asparagine) is linked at asparagine 228. The next 4 membrane-spanning stretches (helical) occupy residues 314-334 (GGFS…MTVI), 374-394 (IIFA…VVAV), 416-436 (MLLA…SVVM), and 506-526 (FGAL…VILV). The segment at 537–563 (ERQLDEDAEEAEEESLLASTGRSGNPT) is disordered. Positions 539-551 (QLDEDAEEAEEES) are enriched in acidic residues.

Belongs to the LIMR family. LMBRD1 subfamily.

The protein localises to the lysosome membrane. Functionally, probable lysosomal cobalamin transporter. Required to export cobalamin from lysosomes allowing its conversion to cofactors. The chain is Probable lysosomal cobalamin transporter from Neosartorya fischeri (strain ATCC 1020 / DSM 3700 / CBS 544.65 / FGSC A1164 / JCM 1740 / NRRL 181 / WB 181) (Aspergillus fischerianus).